An 805-amino-acid polypeptide reads, in one-letter code: Leucine--tRNA ligase (805 aa).

The 'HIGH' region signature appears at 40-51 (PYPSGSGLHVGH). Residues 576-580 (KMSKS) carry the 'KMSKS' region motif. K579 contributes to the ATP binding site.

It belongs to the class-I aminoacyl-tRNA synthetase family.

It is found in the cytoplasm. It carries out the reaction tRNA(Leu) + L-leucine + ATP = L-leucyl-tRNA(Leu) + AMP + diphosphate. This Chlorobium luteolum (strain DSM 273 / BCRC 81028 / 2530) (Pelodictyon luteolum) protein is Leucine--tRNA ligase.